Here is an 876-residue protein sequence, read N- to C-terminus: GRB2-associated and regulator of MAPK protein (876 aa).

Positions 9 to 318 are CABIT; sequence KDVKWSSASF…NLIKGEVWQD (310 aa). Y451 bears the Phosphotyrosine mark. 2 disordered regions span residues 460-569 and 708-741; these read SVKR…TLSY and DRML…LSEP. The span at 461 to 471 shows a compositional bias: polar residues; that stretch reads VKRSGQPLTRS. Residues 532-549 show a composition bias toward pro residues; sequence PPVPPRSSKPSSPTPSVP. Residues 556–569 are compositionally biased toward polar residues; it reads VRQQTRSPSPTLSY. The SAM domain maps to 811 to 876; sequence LSVEEVSKSL…QFINGWRPKM (66 aa).

Belongs to the GAREM family.

Functionally, adapter protein that may provide a link between cell surface epidermal growth factor receptor and the MAPK/ERK signaling pathway. May promote cell proliferation. This chain is GRB2-associated and regulator of MAPK protein (garem1), found in Xenopus laevis (African clawed frog).